Consider the following 264-residue polypeptide: Zinc transporter ZupT (264 aa).

5 helical membrane-spanning segments follow: residues 8–28, 36–56, 75–95, 121–141, and 148–168; these read AFIL…IAFV, FLSV…MIEI, WLTV…DKLI, GLMT…ATFI, and SIAI…GIAV. Fe(2+)-binding residues include Asn-132 and Glu-135. The Zn(2+) site is built by Glu-135 and His-160. Residues Asn-161, Glu-164, and Glu-193 each contribute to the Fe(2+) site. Glu-164 is a binding site for Zn(2+). A run of 3 helical transmembrane segments spans residues 197-217, 219-239, and 244-264; these read AIIG…GAIF, AVAG…AEEY, and LAIY…LLFI.

It belongs to the ZIP transporter (TC 2.A.5) family. ZupT subfamily.

It is found in the cell membrane. It catalyses the reaction Zn(2+)(in) = Zn(2+)(out). Its function is as follows. Mediates zinc uptake. May also transport other divalent cations. The protein is Zinc transporter ZupT of Streptococcus mutans serotype c (strain ATCC 700610 / UA159).